The sequence spans 475 residues: uncharacterized protein (475 aa).

A helical membrane pass occupies residues 19 to 39 (LVSAILILSILIWLIITIFFA).

It localises to the membrane. This is an uncharacterized protein from Mycoplasma pneumoniae (strain ATCC 29342 / M129 / Subtype 1) (Mycoplasmoides pneumoniae).